The following is a 1220-amino-acid chain: Polycomb protein Sfmbt (1220 aa).

The segment at 322-357 adopts an FCS-type zinc-finger fold; that stretch reads PIQKDGMAVCKRCGAIGVKHTFYTKSRRFCSMACAR. 4 residues coordinate Zn(2+): cysteine 331, cysteine 334, cysteine 351, and cysteine 355. Disordered stretches follow at residues 371-399 and 464-483; these read GDQATTSSPDPGAGSESADLPGDQQQSQS and DATAPGSTEEGASTPNSYLS. Positions 473 to 482 are enriched in polar residues; the sequence is EGASTPNSYL. MBT repeat units follow at residues 536 to 647, 655 to 753, 761 to 871, and 879 to 975; these read YDWL…LIPP, KDWK…LAAP, LAGR…VTPP, and FTWE…LEGP. Disordered stretches follow at residues 976-1024 and 1050-1092; these read PRVA…IALK and NNQP…AGSG. The span at 991-1000 shows a compositional bias: basic residues; it reads KIQRKRKPKK. Residues 1052 to 1068 are compositionally biased toward acidic residues; the sequence is QPEEEGDEEDPDADGDG. Over residues 1071-1082 the composition is skewed to polar residues; it reads STSHISEQSTTQ. The span at 1083–1092 shows a compositional bias: low complexity; that stretch reads SSSDLIAGSG. Residues 1140–1203 form the SAM domain; sequence WNVYDVSQFL…SDLIAQLKCK (64 aa).

In terms of assembly, interacts with pho as a component of the pho-repressive complex (PhoRC).

It localises to the nucleus. In terms of biological role, polycomb group (PcG) protein that binds to the Polycomb response elements (PREs) found in the regulatory regions of many genes. PcG proteins act by forming multiprotein complexes, which are required to maintain the transcriptionally repressive state of homeotic genes throughout development. PcG proteins are not required to initiate repression, but to maintain it during later stages of development. They probably act via the methylation of histones, rendering chromatin heritably changed in its expressibility. Necessary but not sufficient to recruit a functional PcG repressive complex that represses target genes, suggesting that the recruitment of the distinct PRC1 complex is also required to allow a subsequent repression. This Drosophila melanogaster (Fruit fly) protein is Polycomb protein Sfmbt.